We begin with the raw amino-acid sequence, 339 residues long: Endo-beta-N-acetylglucosaminidase F1 (339 aa).

The or 51, or 52 signal peptide spans 1–50 (MKKFINQFSASLKNNILVFLAFPFVWTSCARDNPLSSENSNISPNAAARA). The 267-residue stretch at 60–326 (IKLFSFTEVN…KLIAKELYGD (267 aa)) folds into the GH18 domain. Glutamate 182 (proton donor) is an active-site residue. Position 339 (tryptophan 339) is a propeptide, removed in mature form.

It belongs to the glycosyl hydrolase 18 family. As to quaternary structure, monomer.

Its subcellular location is the secreted. It carries out the reaction an N(4)-(oligosaccharide-(1-&gt;3)-[oligosaccharide-(1-&gt;6)]-beta-D-Man-(1-&gt;4)-beta-D-GlcNAc-(1-&gt;4)-alpha-D-GlcNAc)-L-asparaginyl-[protein] + H2O = an oligosaccharide-(1-&gt;3)-[oligosaccharide-(1-&gt;6)]-beta-D-Man-(1-&gt;4)-D-GlcNAc + N(4)-(N-acetyl-beta-D-glucosaminyl)-L-asparaginyl-[protein]. Its function is as follows. Endohydrolysis of the di-N-acetylchitobiosyl unit in high-mannose glycopeptides and glycoproteins. Does not hydrolyze complex bi- or triantennary glycans. The presence of a core-bound fucose impedes endo F1 hydrolysis. The chain is Endo-beta-N-acetylglucosaminidase F1 (endOF1) from Elizabethkingia meningoseptica (Chryseobacterium meningosepticum).